Reading from the N-terminus, the 359-residue chain is Histamine H2 receptor (359 aa).

The Extracellular segment spans residues 1-22 (MAFNGTVPSFCMDFTVYKVTIS). Residue Asn4 is glycosylated (N-linked (GlcNAc...) asparagine). The chain crosses the membrane as a helical span at residues 23 to 44 (VILIILILVTVAGNVVVCLAVG). Residues 45-57 (LNRRLRSLTNCFI) are Cytoplasmic-facing. The chain crosses the membrane as a helical span at residues 58 to 81 (VSLAVTDLLLGLLVLPFSAIYQLS). Over 82–92 (CKWSFSKVFCN) the chain is Extracellular. Cys91 and Cys174 are oxidised to a cystine. Residues 93-114 (IYTSLDVMLCTASILNLFMISL) traverse the membrane as a helical segment. Residues 115 to 134 (DRYCAVTDPLRYPVLITPAR) are Cytoplasmic-facing. Residues 135 to 159 (VAISLVFIWVISITLSFLSIHLGWN) form a helical membrane-spanning segment. Topologically, residues 160–180 (SRNETSKDNDTIVKCKVQVNE) are extracellular. A helical transmembrane segment spans residues 181-204 (VYGLVDGLVTFYLPLLIMCITYFR). The Cytoplasmic segment spans residues 205–234 (IFKIAREQARRINHIGSWKAATIREHKATV). A helical membrane pass occupies residues 235–258 (TLAAVMGAFIICWFPYFTVFVYRG). Residues 259–267 (LKGDDAVNE) lie on the Extracellular side of the membrane. A helical membrane pass occupies residues 268 to 289 (VFEDVVLWLGYANSALNPILYA). Residues 290 to 359 (ALNRDFRTAY…VTAPQGATNR (70 aa)) are Cytoplasmic-facing. Residue Cys305 is the site of S-palmitoyl cysteine attachment.

This sequence belongs to the G-protein coupled receptor 1 family.

The protein resides in the cell membrane. The H2 subclass of histamine receptors mediates gastric acid secretion. The activity of this receptor is mediated by G proteins which activate adenylyl cyclase. The chain is Histamine H2 receptor (HRH2) from Cavia porcellus (Guinea pig).